The sequence spans 96 residues: C-C motif chemokine 20 (96 aa).

Residues 1-26 form the signal peptide; it reads MMCSSKNLLLAALMSVLLLHFCSKSE. Cystine bridges form between C32-C58 and C33-C74.

This sequence belongs to the intercrine beta (chemokine CC) family.

It localises to the secreted. Functionally, acts as a ligand for C-C chemokine receptor CCR6. Signals through binding and activation of CCR6 and induces a strong chemotactic response and mobilization of intracellular calcium ions. The ligand-receptor pair CCL20-CCR6 is responsible for the chemotaxis of dendritic cells (DC), effector/memory T-cells and B-cells and plays an important role at skin and mucosal surfaces under homeostatic and inflammatory conditions, as well as in pathology, including cancer and autoimmune diseases. CCL20 acts as a chemotactic factor that attracts lymphocytes and, slightly, neutrophils, but not monocytes. Involved in the recruitment of both the pro-inflammatory IL17 producing helper T-cells (Th17) and the regulatory T-cells (Treg) to sites of inflammation. Required for optimal migration of thymic natural regulatory T cells (nTregs) and DN1 early thymocyte progenitor cells. Positively regulates sperm motility and chemotaxis via its binding to CCR6 which triggers Ca2+ mobilization in the sperm which is important for its motility. May be involved in formation and function of the mucosal lymphoid tissues by attracting lymphocytes and dendritic cells towards epithelial cells. In Bos taurus (Bovine), this protein is C-C motif chemokine 20 (CCL20).